Reading from the N-terminus, the 182-residue chain is Cell wall protein phiA (182 aa).

A signal peptide spans 1-18 (MKLTSTAALASLAVAATA). N57 and N107 each carry an N-linked (GlcNAc...) asparagine glycan.

This sequence belongs to the phiA family. In terms of tissue distribution, mainly present in phialides and conidia.

It localises to the secreted. It is found in the cell wall. Its function is as follows. Cell wall protein involved in development of asexual structures such as phialide and conidium development, and thus required for spore formation. Plays a role as a general stress protectant produced by the fungus in competition with antagonistic bacteria. The protein is Cell wall protein phiA of Emericella nidulans (strain FGSC A4 / ATCC 38163 / CBS 112.46 / NRRL 194 / M139) (Aspergillus nidulans).